A 304-amino-acid chain; its full sequence is Aspartate carbamoyltransferase catalytic subunit (304 aa).

Residues Arg-53 and Thr-54 each contribute to the carbamoyl phosphate site. L-aspartate is bound at residue Lys-82. Carbamoyl phosphate-binding residues include Arg-103, His-131, and Gln-134. 2 residues coordinate L-aspartate: Arg-163 and Arg-224. Carbamoyl phosphate-binding residues include Leu-263 and Pro-264.

This sequence belongs to the aspartate/ornithine carbamoyltransferase superfamily. ATCase family. Heterooligomer of catalytic and regulatory chains.

The catalysed reaction is carbamoyl phosphate + L-aspartate = N-carbamoyl-L-aspartate + phosphate + H(+). It participates in pyrimidine metabolism; UMP biosynthesis via de novo pathway; (S)-dihydroorotate from bicarbonate: step 2/3. Catalyzes the condensation of carbamoyl phosphate and aspartate to form carbamoyl aspartate and inorganic phosphate, the committed step in the de novo pyrimidine nucleotide biosynthesis pathway. This chain is Aspartate carbamoyltransferase catalytic subunit, found in Haloarcula marismortui (strain ATCC 43049 / DSM 3752 / JCM 8966 / VKM B-1809) (Halobacterium marismortui).